We begin with the raw amino-acid sequence, 465 residues long: Plasma alpha-L-fucosidase (465 aa).

An N-terminal signal peptide occupies residues 1–26 (MRPQELPRLAFPLLLLLLLPPPPCPA). Residues Asn169 and Asn237 are each glycosylated (N-linked (GlcNAc...) asparagine). Position 299 is a phosphoserine (Ser299). The N-linked (GlcNAc...) asparagine glycan is linked to Asn375.

It belongs to the glycosyl hydrolase 29 family. Homotetramer.

It is found in the secreted. The enzyme catalyses an alpha-L-fucoside + H2O = L-fucose + an alcohol. Its function is as follows. Alpha-L-fucosidase is responsible for hydrolyzing the alpha-1,6-linked fucose joined to the reducing-end N-acetylglucosamine of the carbohydrate moieties of glycoproteins. The sequence is that of Plasma alpha-L-fucosidase (FUCA2) from Pongo abelii (Sumatran orangutan).